Consider the following 545-residue polypeptide: Chaperonin GroEL (545 aa).

ATP contacts are provided by residues Thr-29–Pro-32, Asp-86–Thr-90, Gly-413, Asn-478–Ala-480, and Asp-494.

This sequence belongs to the chaperonin (HSP60) family. Forms a cylinder of 14 subunits composed of two heptameric rings stacked back-to-back. Interacts with the co-chaperonin GroES.

It localises to the cytoplasm. The catalysed reaction is ATP + H2O + a folded polypeptide = ADP + phosphate + an unfolded polypeptide.. Together with its co-chaperonin GroES, plays an essential role in assisting protein folding. The GroEL-GroES system forms a nano-cage that allows encapsulation of the non-native substrate proteins and provides a physical environment optimized to promote and accelerate protein folding. In Exiguobacterium sibiricum (strain DSM 17290 / CCUG 55495 / CIP 109462 / JCM 13490 / 255-15), this protein is Chaperonin GroEL.